The following is a 117-amino-acid chain: Fluoride-specific ion channel FluC 2 (117 aa).

Transmembrane regions (helical) follow at residues 1–21, 33–53, 60–80, and 95–115; these read MISIILVMIGGGFGAIARSAI, LPIATLIVNLVGSFLIGLTIG, WFPAFFVTGFLGGLTTFSTLA, and LFLNYSLLQFIIGFIACYIGY. Residues G71 and T74 each coordinate Na(+).

The protein belongs to the fluoride channel Fluc/FEX (TC 1.A.43) family.

It localises to the cell membrane. It catalyses the reaction fluoride(in) = fluoride(out). Its activity is regulated as follows. Na(+) is not transported, but it plays an essential structural role and its presence is essential for fluoride channel function. Fluoride-specific ion channel. Important for reducing fluoride concentration in the cell, thus reducing its toxicity. This chain is Fluoride-specific ion channel FluC 2, found in Staphylococcus aureus (strain COL).